We begin with the raw amino-acid sequence, 492 residues long: Cysteine--tRNA ligase (492 aa).

Cys-27 lines the Zn(2+) pocket. The short motif at 29-39 (VTVYDLCHLGH) is the 'HIGH' region element. Positions 211, 236, and 240 each coordinate Zn(2+). Positions 268 to 272 (KMSKS) match the 'KMSKS' region motif. Lys-271 is an ATP binding site.

It belongs to the class-I aminoacyl-tRNA synthetase family. Monomer. Zn(2+) serves as cofactor.

The protein localises to the cytoplasm. The enzyme catalyses tRNA(Cys) + L-cysteine + ATP = L-cysteinyl-tRNA(Cys) + AMP + diphosphate. The polypeptide is Cysteine--tRNA ligase (Prochlorococcus marinus subsp. pastoris (strain CCMP1986 / NIES-2087 / MED4)).